The primary structure comprises 475 residues: FAD-dependent monooxygenase penE (475 aa).

Residues Glu-35, Gly-49, and Arg-108 each contribute to the FAD site. Tyr-216 is an active-site residue. FAD contacts are provided by Asp-308 and Ala-321. An N-linked (GlcNAc...) asparagine glycan is attached at Asn-437. The chain crosses the membrane as a helical span at residues 446 to 466 (WGSIWLSPVILCLFCMLFLWP).

The protein belongs to the paxM FAD-dependent monooxygenase family. The cofactor is FAD.

It is found in the membrane. The enzyme catalyses [(1'E)-3'-hydroxy-3',7'-dimethylocta-1',6'-dien-1'-yl]-quinolinone B + NADPH + O2 + H(+) = [(1'E)-5'-(3',3'-dimethyloxiran-2'-yl)-3'-hydroxy-3'-methylpent-1'-en-1'-yl]-quinolinone B + NADP(+) + H2O. The protein operates within secondary metabolite biosynthesis. It participates in alkaloid biosynthesis. It functions in the pathway mycotoxin biosynthesis. Functionally, FAD-dependent monooxygenase; part of the gene cluster that mediates the biosynthesis of penigequinolones, potent insecticidal alkaloids that contain a highly modified 10-carbon prenyl group. The first stage is catalyzed by the nonribosomal peptide synthetase penN that condenses anthranilic acid and O-methyl-L-tyrosine to produce 4'-methoxycyclopeptin. 4'-methoxycyclopeptin is then converted to 4'-methoxydehydrocyclopeptin by the ketoglutarate-dependent dioxygenase penM through dehydrogenation to form a double bond between C-alpha and C-beta of the O-methyltyrosine side chain. PenM also converts its first product methoxydehydrocyclopeptin to 4'-methoxycyclopenin. The following conversion of 4'methoxycyclopenin into 4'-methoxyviridicatin is catalyzed by the cyclopenase penL. 4'-methoxyviridicatin is the precursor of quinolone natural products, and is further converted to quinolinone B. The prenyltransferase penI then catalyzes the canonical Friedel-Crafts alkylation of quinolinone B with dimethylallyl cation to yield dimethylallyl quinolone, which is subjected to FAD-dependent dehydrogenation by the FAD-linked oxidoreductase penH to yield conjugated aryl diene. The delta(3') double bond then serves as the site of the second alkylation with DMAPP catalyzed by the prenyltransferase penG to yield a carbenium ion intermediate, which can be attacked by H(2)O to yield a styrenyl quinolone containing a C3'-hydroxyprenyl chain, or undergo cyclization to yield yaequinolones J1 and J2. The conversion of the styrenyl quinolone into the tetrahydrofuran-containing yaequinolone C is performed by the FAD-dependent monooxygenase penE and involves epoxidation of the terminal C7'-C8' olefin, followed by epoxide ring opening initiated by the C3' hydroxyl group. The predicted cysteine hydrolase penJ acts as an epoxide hydrolase that enhances the rate of the 5-exo-tet cyclization step, increasing the yield of yaequinolone C. PenF catalyzes the cationic rearrangement of the epoxide formed by penE (before ring opening to produce yaequinolone C) into yaequinolone D. Finally, the short-chain dehydrogenase/reductase (SDR)-like reductase penD, catalyzes both the dehydration of yaequinolone D and the reduction of the resulting oxonium to yield penigequinolone. The chain is FAD-dependent monooxygenase penE from Penicillium thymicola.